Reading from the N-terminus, the 233-residue chain is Snake venom serine protease ussurase (233 aa).

The Peptidase S1 domain occupies 1-224 (VIGGVECNIN…YTDWIQSIIS (224 aa)). Intrachain disulfides connect Cys-7–Cys-138, Cys-25–Cys-41, Cys-73–Cys-231, Cys-117–Cys-185, Cys-149–Cys-164, and Cys-175–Cys-200. Catalysis depends on His-40, which acts as the Charge relay system. Asn-54 carries an N-linked (GlcNAc...) asparagine glycan. Residue Asp-85 is the Charge relay system of the active site. Ser-179 serves as the catalytic Charge relay system.

Belongs to the peptidase S1 family. Snake venom subfamily. As to quaternary structure, monomer. Expressed by the venom gland.

The protein localises to the secreted. Its function is as follows. Snake venom serine protease that may act in the hemostasis system of the prey. The sequence is that of Snake venom serine protease ussurase from Gloydius ussuriensis (Ussuri mamushi).